The primary structure comprises 426 residues: Tol-Pal system protein TolB (426 aa).

The N-terminal stretch at 1 to 24 is a signal peptide; sequence MKLKSRFTSIIGVITLFFSQTVTA.

It belongs to the TolB family. The Tol-Pal system is composed of five core proteins: the inner membrane proteins TolA, TolQ and TolR, the periplasmic protein TolB and the outer membrane protein Pal. They form a network linking the inner and outer membranes and the peptidoglycan layer.

It is found in the periplasm. Its function is as follows. Part of the Tol-Pal system, which plays a role in outer membrane invagination during cell division and is important for maintaining outer membrane integrity. The sequence is that of Tol-Pal system protein TolB from Actinobacillus pleuropneumoniae serotype 3 (strain JL03).